A 350-amino-acid polypeptide reads, in one-letter code: Induced myeloid leukemia cell differentiation protein Mcl-1 (350 aa).

Glycyl lysine isopeptide (Lys-Gly) (interchain with G-Cter in ubiquitin) cross-links involve residues lysine 5 and lysine 40. The disordered stretch occupies residues 47-87; sequence EIGGGEAGAVIGGSAGASPPSTLTPDSRRVARPPPIGAEVP. A compositionally biased stretch (gly residues) spans 50 to 61; it reads GGEAGAVIGGSA. The tract at residues 104 to 175 is PEST-like; sequence RAAPLEEMEA…PAEEEEDELY (72 aa). Serine 121 carries the post-translational modification Phosphoserine. Residue lysine 136 forms a Glycyl lysine isopeptide (Lys-Gly) (interchain with G-Cter in ubiquitin) linkage. The disordered stretch occupies residues 148–171; the sequence is GESGNNTSTDGSLPSTPPPAEEEE. The span at 150 to 161 shows a compositional bias: polar residues; it reads SGNNTSTDGSLP. Serine 159 carries the post-translational modification Phosphoserine; by GSK3-alpha and GSK3-beta. Phosphoserine is present on serine 162. Position 163 is a phosphothreonine; by MAPK (threonine 163). Glycyl lysine isopeptide (Lys-Gly) (interchain with G-Cter in ubiquitin) cross-links involve residues lysine 194 and lysine 197. A BH3 motif is present at residues 209-223; sequence ALETLRRVGDGVQRN. Positions 252–272 match the BH1 motif; that stretch reads HVFSDGVTNWGRIVTLISFGA. Residues 304–319 carry the BH2 motif; the sequence is DWLVKQRGWDGFVEFF. The chain crosses the membrane as a helical span at residues 328-348; sequence IRNVLLAFAGVAGVGAGLAYL.

It belongs to the Bcl-2 family. As to quaternary structure, interacts with HIF3A (via C-terminus domain). Interacts with BAD, BOK, BIK and BMF. Interacts with PMAIP1. Interacts with BBC3. Isoform 1 interacts with BAX, BAK1 and TPT1. Heterodimer of isoform 1 and isoform 2. Homodimers of isoform 1 or isoform 2 are not detected. Isoform 2 does not interact with pro-apoptotic BCL2-related proteins. Interacts with RTL10/BOP. Interacts with BCL2L11; may sequester BCL2L11 to prevent its pro-apoptotic activity. Interacts with GIMAP5 and HSPA8/HSC70; the interaction between HSPA8 and MCL1 is impaired in the absence of GIMAP5. Cleaved by CASP3 during apoptosis. In intact cells cleavage occurs preferentially after Asp-127, yielding a pro-apoptotic 28 kDa C-terminal fragment. Post-translationally, rapidly degraded in the absence of phosphorylation on Thr-163 in the PEST region. In terms of processing, phosphorylated on Ser-159, by GSK3, in response to IL3/interleukin-3 withdrawal. Phosphorylation at Ser-159 induces ubiquitination and proteasomal degradation, abrogating the anti-apoptotic activity. Treatment with taxol or okadaic acid induces phosphorylation on additional sites. Ubiquitinated. Ubiquitination is induced by phosphorylation at Ser-159. Deubiquitinated by USP20; leading to increased stability.

The protein localises to the membrane. The protein resides in the cytoplasm. It localises to the mitochondrion. Its subcellular location is the nucleus. It is found in the nucleoplasm. Its function is as follows. Involved in the regulation of apoptosis versus cell survival, and in the maintenance of viability but not of proliferation. Mediates its effects by interactions with a number of other regulators of apoptosis. Isoform 1 inhibits apoptosis. Isoform 2 promotes apoptosis. This chain is Induced myeloid leukemia cell differentiation protein Mcl-1 (MCL1), found in Homo sapiens (Human).